The sequence spans 255 residues: Leucyl/phenylalanyl-tRNA--protein transferase (255 aa).

The protein belongs to the L/F-transferase family.

Its subcellular location is the cytoplasm. The catalysed reaction is N-terminal L-lysyl-[protein] + L-leucyl-tRNA(Leu) = N-terminal L-leucyl-L-lysyl-[protein] + tRNA(Leu) + H(+). The enzyme catalyses N-terminal L-arginyl-[protein] + L-leucyl-tRNA(Leu) = N-terminal L-leucyl-L-arginyl-[protein] + tRNA(Leu) + H(+). It catalyses the reaction L-phenylalanyl-tRNA(Phe) + an N-terminal L-alpha-aminoacyl-[protein] = an N-terminal L-phenylalanyl-L-alpha-aminoacyl-[protein] + tRNA(Phe). In terms of biological role, functions in the N-end rule pathway of protein degradation where it conjugates Leu, Phe and, less efficiently, Met from aminoacyl-tRNAs to the N-termini of proteins containing an N-terminal arginine or lysine. The sequence is that of Leucyl/phenylalanyl-tRNA--protein transferase from Polaromonas sp. (strain JS666 / ATCC BAA-500).